Consider the following 73-residue polypeptide: Large ribosomal subunit protein bL31 (73 aa).

C16, C18, C38, and C41 together coordinate Zn(2+).

It belongs to the bacterial ribosomal protein bL31 family. Type A subfamily. Part of the 50S ribosomal subunit. Zn(2+) is required as a cofactor.

Binds the 23S rRNA. In Vibrio vulnificus (strain CMCP6), this protein is Large ribosomal subunit protein bL31.